A 471-amino-acid chain; its full sequence is Membrane-associated sulfotransferase kil1 (471 aa).

The Cytoplasmic portion of the chain corresponds to Met-1–Asn-12. Residues Ile-13–Pro-33 form a helical; Signal-anchor for type II membrane protein membrane-spanning segment. Topologically, residues Gln-34–Asn-471 are lumenal. The N-linked (GlcNAc...) asparagine glycan is linked to Asn-47. 2 stretches are compositionally biased toward low complexity: residues Asn-89–Lys-105 and Asn-112–Asn-127. The tract at residues Asn-89–Asn-127 is disordered. Residues Lys-167–Phe-172, Arg-252, and Ser-260 contribute to the 3'-phosphoadenylyl sulfate site. Residues Asn-324 and Asn-344 are each glycosylated (N-linked (GlcNAc...) asparagine). Tyr-348 is a 3'-phosphoadenylyl sulfate binding site.

This sequence belongs to the sulfotransferase 1 family.

Its subcellular location is the membrane. In terms of biological role, sulfotransferase involved in intracellular killing of bacteria. The protein is Membrane-associated sulfotransferase kil1 (kil1) of Dictyostelium discoideum (Social amoeba).